The chain runs to 191 residues: Ferric nitrobindin-like protein (191 aa).

A GXWXGXG motif is present at residues 20-26 (GDWAGAG).

This sequence belongs to the nitrobindin family.

In Streptomyces coelicolor (strain ATCC BAA-471 / A3(2) / M145), this protein is Ferric nitrobindin-like protein.